Reading from the N-terminus, the 177-residue chain is Large ribosomal subunit protein uL6 (177 aa).

This sequence belongs to the universal ribosomal protein uL6 family. Part of the 50S ribosomal subunit.

This protein binds to the 23S rRNA, and is important in its secondary structure. It is located near the subunit interface in the base of the L7/L12 stalk, and near the tRNA binding site of the peptidyltransferase center. In Neisseria gonorrhoeae (strain ATCC 700825 / FA 1090), this protein is Large ribosomal subunit protein uL6.